Consider the following 357-residue polypeptide: Peptide chain release factor 1 (357 aa).

Residue Gln234 is modified to N5-methylglutamine. The tract at residues Asp282–Gln313 is disordered.

The protein belongs to the prokaryotic/mitochondrial release factor family. Post-translationally, methylated by PrmC. Methylation increases the termination efficiency of RF1.

The protein localises to the cytoplasm. Functionally, peptide chain release factor 1 directs the termination of translation in response to the peptide chain termination codons UAG and UAA. The sequence is that of Peptide chain release factor 1 from Borreliella afzelii (strain PKo) (Borrelia afzelii).